A 493-amino-acid chain; its full sequence is Cytochrome P450 monooxygenase mfmF (493 aa).

2 helical membrane-spanning segments follow: residues 3–23 (SLIP…RLFF) and 301–321 (VLFA…FHLV). A heme-binding site is contributed by Cys440.

This sequence belongs to the cytochrome P450 family. Heme is required as a cofactor.

It is found in the membrane. It functions in the pathway secondary metabolite biosynthesis; terpenoid biosynthesis. Functionally, cytochrome P450 monooxygenase; part of the gene cluster that mediates the biosynthesis of the phthalide-terpenoid hybrid 11'-O-desmethylfendlerol. Within the pathway, mfmF catalyzes C-3 hydroxylation of 5-hydroxy-4-(hydroxymethyl)-7-methoxy-6-methylphthalide to yield cyclopolic acid. The biosynthesis of 11'-O-desmethylfendlerol begins with the NR-PKS mfmB that forms 3,5-dimethylorsellinic acid (DMOA), which is then transformed into the phthalide 5,7-dihydroxy-4-(hydroxymethyl)-6-methylphthalide by the cytochrome P450 monooxygenase mfmA and the hydrolase mfmC. Subsequently, the methyltransferase mfmE catalyzes 7-O-methylation to yield 5-hydroxy-4-(hydroxymethyl)-7-methoxy-6-methylphthalide, which undergoes C-3 hydroxylation by the cytochrome P450 monooxygenase mfmF. The resultant cyclopolic acid (2,5-dihydroxy-4-(hydroxymethyl)-7-methoxy-6-methylphthalide) is then farnesylated by the DMATS-type prenyltransferase mfmD to afford 5-O-farnesylcyclopolic acid. Finally, the Pyr4-family terpene cyclase mfmH cyclizes the farnesyl moiety of 5-O-farnesylcyclopolic acid into a drimane-like structure, thus completing the biosynthesis of 11'-O-desmethylfendlerol. The sequence is that of Cytochrome P450 monooxygenase mfmF from Annulohypoxylon moriforme (Filamentous fungus).